A 572-amino-acid polypeptide reads, in one-letter code: Probable inactive glycosyltransferase 25 family member 3 (572 aa).

N-linked (GlcNAc...) asparagine glycans are attached at residues Asn52, Asn130, Asn214, and Asn337. Positions 569–572 (RDEL) match the Prevents secretion from ER motif.

This sequence belongs to the glycosyltransferase 25 family.

The protein localises to the endoplasmic reticulum lumen. In terms of biological role, probable cell adhesion protein involved in leukocyte transmigration across the blood-brain barrier. Does not express any beta-galactosyltransferase activity in vitro. This Rattus norvegicus (Rat) protein is Probable inactive glycosyltransferase 25 family member 3 (Cercam).